The primary structure comprises 157 residues: tRNA (cytidine(34)-2'-O)-methyltransferase (157 aa).

L78, G100, I122, and S130 together coordinate S-adenosyl-L-methionine.

It belongs to the class IV-like SAM-binding methyltransferase superfamily. RNA methyltransferase TrmH family. TrmL subfamily. Homodimer.

The protein resides in the cytoplasm. The catalysed reaction is cytidine(34) in tRNA + S-adenosyl-L-methionine = 2'-O-methylcytidine(34) in tRNA + S-adenosyl-L-homocysteine + H(+). It catalyses the reaction 5-carboxymethylaminomethyluridine(34) in tRNA(Leu) + S-adenosyl-L-methionine = 5-carboxymethylaminomethyl-2'-O-methyluridine(34) in tRNA(Leu) + S-adenosyl-L-homocysteine + H(+). In terms of biological role, methylates the ribose at the nucleotide 34 wobble position in the two leucyl isoacceptors tRNA(Leu)(CmAA) and tRNA(Leu)(cmnm5UmAA). Catalyzes the methyl transfer from S-adenosyl-L-methionine to the 2'-OH of the wobble nucleotide. This Escherichia coli O6:H1 (strain CFT073 / ATCC 700928 / UPEC) protein is tRNA (cytidine(34)-2'-O)-methyltransferase.